Here is a 314-residue protein sequence, read N- to C-terminus: Vomeronasal type-1 receptor 95 (314 aa).

Over 1-18 (MNKDNTLYCSAYRIAFFS) the chain is Extracellular. A helical transmembrane segment spans residues 19 to 39 (EIGIGISANSCLLLFHTFMFI). Topologically, residues 40–48 (RGHRPRLTD) are cytoplasmic. Residues 49-69 (LPIGLVALIHLVMLLLAAYIT) traverse the membrane as a helical segment. At 70–88 (EDFFMSSGGWDDITCKLFI) the chain is on the extracellular side. Cys-84 and Cys-171 are oxidised to a cystine. A helical membrane pass occupies residues 89-113 (FLHRFFRSLSVCDTCMLSVFQAIIL). Topologically, residues 114 to 133 (CPQSSHLAKFKLNSPHHLSC) are cytoplasmic. A helical transmembrane segment spans residues 134–154 (FFIFMSIFYTSISSHILIAAI). The Extracellular segment spans residues 155–186 (ATQNLTSVNLIYITKSCSFLPMSSSMQRTFST). N-linked (GlcNAc...) asparagine glycosylation occurs at Asn-158. The chain crosses the membrane as a helical span at residues 187–207 (LLAFRNVFLIGLMGLSTCYMA). Topologically, residues 208-235 (TLLCRHKTRSQQLQNSKLSPKATPEQRA) are cytoplasmic. The chain crosses the membrane as a helical span at residues 236–256 (IWTILMLMSFFLIISTFDSIM). Residues 257–268 (TYSRTIFQGNQS) lie on the Extracellular side of the membrane. N-linked (GlcNAc...) asparagine glycosylation is present at Asn-266. Residues 269–289 (LYCVQIPVAHGYAAFSPLLVL) form a helical membrane-spanning segment. Residues 290–314 (NNEKRLTSLMISMYDRIVRLESLCS) are Cytoplasmic-facing.

Belongs to the G-protein coupled receptor 1 family.

The protein localises to the cell membrane. Putative pheromone receptor implicated in the regulation of social as well as reproductive behavior. The sequence is that of Vomeronasal type-1 receptor 95 (Vom1r95) from Rattus norvegicus (Rat).